A 384-amino-acid chain; its full sequence is Cell division protein FtsZ (384 aa).

GTP contacts are provided by residues G20–N24, G107–G109, E138, R142, and N186.

This sequence belongs to the FtsZ family. As to quaternary structure, homodimer. Polymerizes to form a dynamic ring structure in a strictly GTP-dependent manner. Interacts directly with several other division proteins.

It is found in the cytoplasm. Essential cell division protein that forms a contractile ring structure (Z ring) at the future cell division site. The regulation of the ring assembly controls the timing and the location of cell division. One of the functions of the FtsZ ring is to recruit other cell division proteins to the septum to produce a new cell wall between the dividing cells. Binds GTP and shows GTPase activity. The protein is Cell division protein FtsZ of Buchnera aphidicola subsp. Schizaphis graminum (strain Sg).